The primary structure comprises 248 residues: Aquaporin TIP2-3 (248 aa).

2 consecutive transmembrane segments (helical) span residues 20–40 (AYVA…GSAI) and 54–74 (AGLV…VSMA). The NPA 1 signature appears at 83-85 (NPA). A run of 3 helical transmembrane segments spans residues 97–119 (TILT…CFLL), 141–161 (GVVM…ATAA), and 168–188 (LGTI…LAAG). The NPA 2 signature appears at 196–198 (NPA). A helical transmembrane segment spans residues 217-237 (WVGPLVGGGLAGLVYGDVFIA).

Belongs to the MIP/aquaporin (TC 1.A.8) family. TIP (TC 1.A.8.10) subfamily. Specifically expressed in roots.

The protein resides in the cell membrane. Water channel required to facilitate the transport of water across cell membrane. The polypeptide is Aquaporin TIP2-3 (TIP2-3) (Zea mays (Maize)).